The chain runs to 421 residues: Outer capsid protein P8 (421 aa).

This sequence belongs to the phytoreovirus outer capsid protein P8 family. Homotrimer. Homomultimer. Interacts with host peroxisomal glycolate oxidase (GOX). This interaction mediates its relocation to virus factories peripheral to host peroxisomes.

It is found in the virion. The protein localises to the host cytoplasm. Capsid protein which self-assembles to form the outer icosahedral capsid with a T=13 symmetry, about 70 nm in diameter and consisting of 780 molecules capsid proteins. The chain is Outer capsid protein P8 (S8) from Rice dwarf virus (isolate S) (RDV).